The primary structure comprises 391 residues: Processive diacylglycerol beta-glucosyltransferase (391 aa).

It belongs to the glycosyltransferase 28 family. UgtP subfamily.

Its subcellular location is the cell membrane. The catalysed reaction is a 1,2-diacyl-3-O-(beta-D-glucopyranosyl)-sn-glycerol + UDP-alpha-D-glucose = a 1,2-diacyl-3-O-(beta-D-Glc-(1-&gt;6)-beta-D-Glc)-sn-glycerol + UDP + H(+). It catalyses the reaction a 1,2-diacyl-sn-glycerol + UDP-alpha-D-glucose = a 1,2-diacyl-3-O-(beta-D-glucopyranosyl)-sn-glycerol + UDP + H(+). It functions in the pathway glycolipid metabolism; diglucosyl-diacylglycerol biosynthesis. In terms of biological role, processive glucosyltransferase involved in the biosynthesis of both the bilayer- and non-bilayer-forming membrane glucolipids. Is able to successively transfer two glucosyl residues to diacylglycerol (DAG), thereby catalyzing the formation of beta-monoglucosyl-DAG (3-O-(beta-D-glucopyranosyl)-1,2-diacyl-sn-glycerol) and beta-diglucosyl-DAG (3-O-(beta-D-glucopyranosyl-beta-(1-&gt;6)-D-glucopyranosyl)-1,2-diacyl-sn-glycerol). Beta-diglucosyl-DAG is the predominant glycolipid found in Bacillales and is also used as a membrane anchor for lipoteichoic acid (LTA). The sequence is that of Processive diacylglycerol beta-glucosyltransferase from Staphylococcus saprophyticus subsp. saprophyticus (strain ATCC 15305 / DSM 20229 / NCIMB 8711 / NCTC 7292 / S-41).